Here is a 305-residue protein sequence, read N- to C-terminus: tRNA pseudouridine synthase B (305 aa).

Catalysis depends on aspartate 48, which acts as the Nucleophile.

Belongs to the pseudouridine synthase TruB family. Type 1 subfamily.

It carries out the reaction uridine(55) in tRNA = pseudouridine(55) in tRNA. In terms of biological role, responsible for synthesis of pseudouridine from uracil-55 in the psi GC loop of transfer RNAs. This Pseudomonas fluorescens (strain ATCC BAA-477 / NRRL B-23932 / Pf-5) protein is tRNA pseudouridine synthase B.